A 90-amino-acid chain; its full sequence is Acylphosphatase (90 aa).

One can recognise an Acylphosphatase-like domain in the interval 3-90 (AVTLKATGRV…QNYHDFRITN (88 aa)). Catalysis depends on residues R18 and N36.

The protein belongs to the acylphosphatase family.

The enzyme catalyses an acyl phosphate + H2O = a carboxylate + phosphate + H(+). The sequence is that of Acylphosphatase (acyP) from Lactiplantibacillus plantarum (strain ATCC BAA-793 / NCIMB 8826 / WCFS1) (Lactobacillus plantarum).